The chain runs to 210 residues: HTH-type transcriptional regulator MtrR (210 aa).

The 61-residue stretch at 9–69 (LKTKEHLMLA…ALFQRICDDI (61 aa)) folds into the HTH tetR-type domain. The segment at residues 32-51 (SLNEIAQAAGVTRGALYWHF) is a DNA-binding region (H-T-H motif).

Homodimer. Binds to DNA as a pair of dimers.

With respect to regulation, DNA binding is affected significantly by increasing the NaCl concentration. Its function is as follows. Controls the permeability of the cell envelope to hydrophobic compounds such as antibiotics and detergents. Represses transcription of the mtrCDE-encoded efflux pump by binding within the mtrCDE promoter. Also negatively regulates the expression of farR, by binding to its promoter region, leading indirectly to the positive regulation of expression of the farAB-encoded efflux pump. The chain is HTH-type transcriptional regulator MtrR from Neisseria gonorrhoeae.